We begin with the raw amino-acid sequence, 390 residues long: Lipoyl synthase, mitochondrial (390 aa).

The N-terminal 19 residues, 1-19, are a transit peptide targeting the mitochondrion; it reads MPTLLRILRPPRSPFTRCL. The interval 23 to 48 is disordered; sequence ATPSSSGSSSRSKFTESLETGPGLDD. Positions 98, 103, 109, 136, 140, 143, and 350 each coordinate [4Fe-4S] cluster. Residues 119-339 form the Radical SAM core domain; that stretch reads AEGRSAATAT…KEVAENLGFL (221 aa).

It belongs to the radical SAM superfamily. Lipoyl synthase family. [4Fe-4S] cluster serves as cofactor.

It is found in the mitochondrion. The catalysed reaction is [[Fe-S] cluster scaffold protein carrying a second [4Fe-4S](2+) cluster] + N(6)-octanoyl-L-lysyl-[protein] + 2 oxidized [2Fe-2S]-[ferredoxin] + 2 S-adenosyl-L-methionine + 4 H(+) = [[Fe-S] cluster scaffold protein] + N(6)-[(R)-dihydrolipoyl]-L-lysyl-[protein] + 4 Fe(3+) + 2 hydrogen sulfide + 2 5'-deoxyadenosine + 2 L-methionine + 2 reduced [2Fe-2S]-[ferredoxin]. Its pathway is protein modification; protein lipoylation via endogenous pathway; protein N(6)-(lipoyl)lysine from octanoyl-[acyl-carrier-protein]: step 2/2. In terms of biological role, catalyzes the radical-mediated insertion of two sulfur atoms into the C-6 and C-8 positions of the octanoyl moiety bound to the lipoyl domains of lipoate-dependent enzymes, thereby converting the octanoylated domains into lipoylated derivatives. This chain is Lipoyl synthase, mitochondrial, found in Laccaria bicolor (strain S238N-H82 / ATCC MYA-4686) (Bicoloured deceiver).